The following is a 524-amino-acid chain: Vang-like protein 1 (524 aa).

Residues Met1–Ser15 are compositionally biased toward low complexity. The disordered stretch occupies residues Met1–His85. Residues Met1–Ser117 are Cytoplasmic-facing. Polar residues predominate over residues Gly73–His85. Phosphoserine is present on residues Ser86 and Ser88. A helical membrane pass occupies residues Phe118–Trp138. Over Arg139–Gly151 the chain is Extracellular. A helical transmembrane segment spans residues Leu152 to Phe172. Residues Arg173–Val182 lie on the Cytoplasmic side of the membrane. A helical membrane pass occupies residues Phe183–Phe203. Topologically, residues Tyr204–Tyr222 are extracellular. The chain crosses the membrane as a helical span at residues Ala223–Leu243. Over Arg244–Val524 the chain is Cytoplasmic.

The protein belongs to the Vang family. As to quaternary structure, heterodimer with VANGL2. Interacts through its C-terminal region with the N-terminal half of DVL1, DVL2 and DVL3. The PDZ domain of DVL1, DVL2 and DVL3 is required for the interaction. According to PubMed:11956595, ubiquitously expressed. According to PubMed:12011995, expressed specifically in testis and ovary.

Its subcellular location is the cell membrane. The protein is Vang-like protein 1 (VANGL1) of Homo sapiens (Human).